The chain runs to 531 residues: UDP-glucuronosyltransferase 1A7 (531 aa).

The signal sequence occupies residues 1–25 (MAPADFPASLPLCVCLLLASGLAQA). Residues asparagine 293 and asparagine 431 are each glycosylated (N-linked (GlcNAc...) asparagine). The helical transmembrane segment at 489–509 (VIGFLLAIVLTVVFIVFKCCA) threads the bilayer.

It belongs to the UDP-glycosyltransferase family. In terms of assembly, homodimer. Homooligomer. Interacts with UGT1A1, UGT1A3, UGT1A4, UGT1A6, UGT1A8, UGT1A9 and UGT1A10 to form heterodimers. In terms of tissue distribution, widely expressed with highest levels detected in colon and kidney.

It localises to the endoplasmic reticulum membrane. The enzyme catalyses glucuronate acceptor + UDP-alpha-D-glucuronate = acceptor beta-D-glucuronoside + UDP + H(+). The catalysed reaction is 17alpha-estradiol + UDP-alpha-D-glucuronate = 17alpha-estradiol 3-O-(beta-D-glucuronate) + UDP + H(+). It carries out the reaction prunetin + UDP-alpha-D-glucuronate = prunetin-5-O-beta-D-glucuronide + UDP. It catalyses the reaction 5-epi-5-F2t-IsoP + UDP-alpha-D-glucuronate = 5-epi-5-F2t-IsoP-glucuronide + UDP + H(+). The enzyme catalyses (E)-ferulate + UDP-alpha-D-glucuronate = (E)-ferulic acid beta-D-glucuronate ester + UDP. The catalysed reaction is candesartan + UDP-alpha-D-glucuronate = candesartan O-beta-D-glucuronoside + UDP. It carries out the reaction SN-38 + UDP-alpha-D-glucuronate = SN-38 O-beta-D-glucuronide + UDP + H(+). It catalyses the reaction mycophenolate + UDP-alpha-D-glucuronate = mycophenolate 7-O-beta-D-glucuronide + UDP + H(+). Its function is as follows. UDP-glucuronosyltransferase (UGT) that catalyzes phase II biotransformation reactions in which lipophilic substrates are conjugated with glucuronic acid to increase the metabolite's water solubility, thereby facilitating excretion into either the urine or bile. Essential for the elimination and detoxification of drugs, xenobiotics and endogenous compounds. Catalyzes the glucuronidation of endogenous estrogen hormone epiestradiol. Involved in the glucuronidation of F2-isoprostane (5-epi-5-F2t-IsoP). Involved in the glucuronidation of the phytochemical ferulic acid at the carboxylic acid group. Also catalyzes the glucuronidation of the isoflavones genistein, daidzein, glycitein, formononetin, biochanin A and prunetin, which are phytoestrogens with anticancer and cardiovascular properties. Involved in the glucuronidation of the AGTR1 angiotensin receptor antagonist caderastan, a drug which can inhibit the effect of angiotensin II. Involved in the biotransformation of 7-ethyl-10-hydroxycamptothecin (SN-38), the pharmacologically active metabolite of the anticancer drug irinotecan. Also metabolizes mycophenolate, an immunosuppressive agent. The protein is UDP-glucuronosyltransferase 1A7 of Mus musculus (Mouse).